We begin with the raw amino-acid sequence, 366 residues long: 2-aminoethylphosphonate--pyruvate transaminase (366 aa).

At K192 the chain carries N6-(pyridoxal phosphate)lysine.

Belongs to the class-V pyridoxal-phosphate-dependent aminotransferase family. PhnW subfamily. Homodimer. Pyridoxal 5'-phosphate is required as a cofactor.

It catalyses the reaction (2-aminoethyl)phosphonate + pyruvate = phosphonoacetaldehyde + L-alanine. Involved in phosphonate degradation. In Lysinibacillus sphaericus (strain C3-41), this protein is 2-aminoethylphosphonate--pyruvate transaminase (phnW).